A 174-amino-acid chain; its full sequence is Probable calcium-binding protein CML20 (174 aa).

Gly-2 carries N-myristoyl glycine lipidation. The segment at Leu-14–Ser-35 is disordered. EF-hand domains lie at Glu-39 to Glu-74, Ala-75 to Glu-100, Gly-102 to Asp-137, and Leu-141 to Ala-174. Positions 52, 54, 56, 63, 83, 85, 87, 94, 115, 117, 119, 126, 154, 156, 158, and 165 each coordinate Ca(2+).

Potential calcium sensor. The sequence is that of Probable calcium-binding protein CML20 (CML20) from Oryza sativa subsp. japonica (Rice).